The following is a 391-amino-acid chain: Metal tolerance protein 7 (391 aa).

A disordered region spans residues 1 to 21; it reads MGSRGRRGGGERETETEEDET. Residues 1-103 lie on the Cytoplasmic side of the membrane; sequence MGSRGRRGGG…LRQMAKGERL (103 aa). Residues 104–124 form a helical membrane-spanning segment; sequence AINLSNIINLILFIGKVLASV. The Vacuolar portion of the chain corresponds to 125-134; the sequence is ESLSMAVIAS. A helical membrane pass occupies residues 135-155; the sequence is TLDSLLDLLSGFILWFTAHAM. The Cytoplasmic segment spans residues 156-171; sequence KKPNKYSYPIGKRRMQ. Residues 172 to 192 traverse the membrane as a helical segment; sequence PVGIIVFASVMGTLGFQVLIE. Residues 193 to 210 lie on the Vacuolar side of the membrane; that stretch reads SGRQLITNEHQVFDHRKE. A helical membrane pass occupies residues 211–231; it reads LWMIGSMSSVAVVKFFLMLYC. The Cytoplasmic segment spans residues 232–246; it reads RSFKNEIVRAYAQDH. Residues 247–264 traverse the membrane as a helical segment; sequence FFDVITNSVGLVSALLAV. Topologically, residues 265 to 266 are vacuolar; the sequence is RY. The helical transmembrane segment at 267 to 287 threads the bilayer; that stretch reads KWWMDPVGAILIAVYTITTWA. At 288–391 the chain is on the cytoplasmic side; the sequence is RTVVENVGTL…THRPEHKAEV (104 aa).

It belongs to the cation diffusion facilitator (CDF) transporter (TC 2.A.4) family. SLC30A subfamily.

Its subcellular location is the vacuole membrane. In terms of biological role, involved in sequestration of excess metal in the cytoplasm into vacuoles to maintain metal homeostasis. The protein is Metal tolerance protein 7 (MTP7) of Oryza sativa subsp. japonica (Rice).